Consider the following 191-residue polypeptide: Ribosome maturation factor RimM (191 aa).

The PRC barrel domain occupies E107 to L184.

The protein belongs to the RimM family. Binds ribosomal protein uS19.

It localises to the cytoplasm. Its function is as follows. An accessory protein needed during the final step in the assembly of 30S ribosomal subunit, possibly for assembly of the head region. Essential for efficient processing of 16S rRNA. May be needed both before and after RbfA during the maturation of 16S rRNA. It has affinity for free ribosomal 30S subunits but not for 70S ribosomes. This Kocuria rhizophila (strain ATCC 9341 / DSM 348 / NBRC 103217 / DC2201) protein is Ribosome maturation factor RimM.